The chain runs to 1735 residues: Inactive tyrosine-protein kinase PEAK1 (1735 aa).

Disordered regions lie at residues leucine 26–alanine 66 and leucine 111–asparagine 145. Polar residues-rich tracts occupy residues leucine 111 to glutamate 121 and aspartate 130 to asparagine 145. Serine 282 carries the phosphoserine modification. 3 disordered regions span residues asparagine 324–valine 410, glycine 491–glycine 514, and serine 537–isoleucine 580. Residues serine 325–serine 336 show a composition bias toward low complexity. The segment covering threonine 337–valine 365 has biased composition (polar residues). The span at asparagine 367–serine 378 shows a compositional bias: low complexity. A compositionally biased stretch (polar residues) spans threonine 384–glycine 393. The span at serine 498 to proline 509 shows a compositional bias: low complexity. A phosphoserine mark is found at serine 537, serine 569, and serine 584. The segment covering alanine 566–isoleucine 580 has biased composition (polar residues). Tyrosine 632 and tyrosine 638 each carry phosphotyrosine. Serine 645 carries the phosphoserine modification. Residue tyrosine 662 is modified to Phosphotyrosine. Disordered stretches follow at residues glutamate 663–alanine 762, proline 800–alanine 919, and arginine 1019–tyrosine 1097. 3 stretches are compositionally biased toward polar residues: residues glutamine 704 to threonine 735, alanine 745 to serine 757, and leucine 819 to alanine 839. Phosphoserine is present on residues serine 824 and serine 825. The span at threonine 847 to serine 863 shows a compositional bias: low complexity. Over residues glutamate 864–arginine 873 the composition is skewed to pro residues. The segment covering tyrosine 879–serine 901 has biased composition (polar residues). Position 897 is a phosphoserine (serine 897). Composition is skewed to basic and acidic residues over residues threonine 902 to alanine 919 and alanine 1037 to arginine 1055. The segment covering glutamate 1076–aspartate 1086 has biased composition (acidic residues). A Phosphothreonine modification is found at threonine 1141. Phosphotyrosine is present on tyrosine 1177. A required for homodimerization region spans residues glutamate 1274–alanine 1300. One can recognise a Protein kinase domain in the interval glutamine 1302 to phenylalanine 1664. Residue serine 1363 is modified to Phosphoserine. Residues tryptophan 1394–arginine 1445 are disordered. The tract at residues proline 1659 to leucine 1732 is required for homodimerization.

It belongs to the protein kinase superfamily. Homodimer. Interacts with BCAR1 and CRK. Interacts with PRAG1. Interacts (when phosphorylated at Tyr-1177) with SHC1 (via PID domain). Found in a complex with PPP1CA, PPP1CC and SHC1. Interacts (when phosphorylated at Tyr-632) with tensin TNS3 (when phosphorylated on the SH2 domain); TNS3 also interacts with integrins ITGB1, ITGB3 and ITGB5 and mediates their association with PEAK1. Post-translationally, phosphorylated on tyrosine in a CSK-dependent manner in response to adhesion to fibronectin and to EGF stimulation. Phosphorylation at Tyr-662 by a Src family kinase controls subcellular localization to focal adhesion and focal adhesion dynamics. Phosphorylation at Tyr-1177 is essential for binding to SHC1. Phosphorylation at Tyr-632 promotes interaction with tensin TNS3.

The protein localises to the cytoplasm. The protein resides in the cytoskeleton. It is found in the cell junction. It localises to the focal adhesion. Its function is as follows. Probable catalytically inactive kinase. Scaffolding protein that regulates the cytoskeleton to control cell spreading and migration by modulating focal adhesion dynamics. Acts as a scaffold for mediating EGFR signaling. The protein is Inactive tyrosine-protein kinase PEAK1 (Peak1) of Mus musculus (Mouse).